A 464-amino-acid chain; its full sequence is Forkhead box protein N3 (464 aa).

Disordered stretches follow at residues Met-1–Gly-53 and Pro-85–Gln-108. The segment covering Thr-14–Asn-30 has biased composition (polar residues). A DNA-binding region (fork-head) is located at residues Lys-113–Pro-209. Disordered stretches follow at residues Met-294 to Ala-337 and Leu-381 to Ala-428. The segment covering Ser-316–Ser-336 has biased composition (low complexity). A compositionally biased stretch (basic residues) spans Gln-389–Arg-401.

The protein resides in the nucleus. Functionally, acts as a transcriptional repressor. May be involved in DNA damage-inducible cell cycle arrests (checkpoints). This is Forkhead box protein N3 from Xenopus tropicalis (Western clawed frog).